The following is a 466-amino-acid chain: Soluble pyridine nucleotide transhydrogenase (466 aa).

An FAD-binding site is contributed by 36–45; it reads ERYHQVGGGC.

The protein belongs to the class-I pyridine nucleotide-disulfide oxidoreductase family. The cofactor is FAD.

The protein localises to the cytoplasm. The catalysed reaction is NAD(+) + NADPH = NADH + NADP(+). In terms of biological role, conversion of NADPH, generated by peripheral catabolic pathways, to NADH, which can enter the respiratory chain for energy generation. The polypeptide is Soluble pyridine nucleotide transhydrogenase (Colwellia psychrerythraea (strain 34H / ATCC BAA-681) (Vibrio psychroerythus)).